Reading from the N-terminus, the 509-residue chain is Maturase K (509 aa).

The protein belongs to the intron maturase 2 family. MatK subfamily.

It localises to the plastid. It is found in the chloroplast. Functionally, usually encoded in the trnK tRNA gene intron. Probably assists in splicing its own and other chloroplast group II introns. This Nicotiana paniculata protein is Maturase K.